The sequence spans 161 residues: Endoribonuclease YbeY (161 aa).

Zn(2+) is bound by residues His-121, His-125, and His-131.

Belongs to the endoribonuclease YbeY family. Zn(2+) serves as cofactor.

The protein resides in the cytoplasm. Its function is as follows. Single strand-specific metallo-endoribonuclease involved in late-stage 70S ribosome quality control and in maturation of the 3' terminus of the 16S rRNA. The polypeptide is Endoribonuclease YbeY (Bordetella avium (strain 197N)).